A 265-amino-acid polypeptide reads, in one-letter code: MICOS complex subunit Mic27 (265 aa).

Residues 1–27 (MAAFRMGKLTTIPAGLIYASINVRLAK) constitute a mitochondrion transit peptide. Residues 28-110 (EEEPKKQLVR…YVYLKNPPQD (83 aa)) lie on the Mitochondrial intermembrane side of the membrane. A helical transmembrane segment spans residues 111-129 (FLPKMGVITASGLAGLLSA). Over 130 to 137 (RKGSRFKK) the chain is Mitochondrial matrix. Residues 138 to 155 (IAYPLGLATLGATVCYPA) form a helical membrane-spanning segment. The Mitochondrial intermembrane portion of the chain corresponds to 156–265 (QSVIIAKITG…DDKDMYSTRS (110 aa)). Disordered stretches follow at residues 187 to 215 (SENESLPEPKEESKEGRSDEIHASLPDLK) and 229 to 265 (VIKSESTSGTTQFIPDPKLMDHGQSHPDDKDMYSTRS). Ser204 bears the Phosphoserine mark. Polar residues predominate over residues 229-241 (VIKSESTSGTTQF). Residues 246-265 (KLMDHGQSHPDDKDMYSTRS) show a composition bias toward basic and acidic residues.

The protein belongs to the apolipoprotein O/MICOS complex subunit Mic27 family. Component of the mitochondrial contact site and cristae organizing system (MICOS) complex, composed of at least MICOS10/MIC10, CHCHD3/MIC19, CHCHD6/MIC25, APOOL/MIC27, IMMT/MIC60, APOO/MIC23/MIC26 and MICOS13/MIC13. This complex was also known under the names MINOS or MitOS complex. The MICOS complex associates with mitochondrial outer membrane proteins SAMM50, MTX1 and MTX2 (together described as components of the mitochondrial outer membrane sorting assembly machinery (SAM) complex) and DNAJC11, mitochondrial inner membrane protein TMEM11 and with HSPA9. The MICOS and SAM complexes together with DNAJC11 are part of a large protein complex spanning both membranes termed the mitochondrial intermembrane space bridging (MIB) complex. Interacts with MICOS10/MIC10, IMMT/MIC60 and APOO/MIC23/MIC26.

Its subcellular location is the mitochondrion inner membrane. The protein localises to the mitochondrion. In terms of biological role, component of the MICOS complex, a large protein complex of the mitochondrial inner membrane that plays crucial roles in the maintenance of crista junctions, inner membrane architecture, and formation of contact sites to the outer membrane. Specifically binds to cardiolipin (in vitro) but not to the precursor lipid phosphatidylglycerol. Plays a crucial role in crista junction formation and mitochondrial function. The polypeptide is MICOS complex subunit Mic27 (Apool) (Mus musculus (Mouse)).